Reading from the N-terminus, the 160-residue chain is Iron-sulfur assembly protein IscA1 (160 aa).

It belongs to the HesB/IscA family. Tetramer.

Its subcellular location is the mitochondrion. It functions in the pathway cofactor biosynthesis; iron-sulfur cluster biosynthesis. Functionally, participates in iron-sulfur cluster formation (ISC) pathway for iron-sulfur (Fe-S) cluster biogenesis. Can bind iron and [4Fe-4S] clusters. May function as an iron chaperone. The protein is Iron-sulfur assembly protein IscA1 of Plasmodium falciparum (isolate 3D7).